The following is a 302-amino-acid chain: Sulfate adenylyltransferase subunit 2 (302 aa).

The protein belongs to the PAPS reductase family. CysD subfamily. Heterodimer composed of CysD, the smaller subunit, and CysN.

The enzyme catalyses sulfate + ATP + H(+) = adenosine 5'-phosphosulfate + diphosphate. The protein operates within sulfur metabolism; hydrogen sulfide biosynthesis; sulfite from sulfate: step 1/3. Its function is as follows. With CysN forms the ATP sulfurylase (ATPS) that catalyzes the adenylation of sulfate producing adenosine 5'-phosphosulfate (APS) and diphosphate, the first enzymatic step in sulfur assimilation pathway. APS synthesis involves the formation of a high-energy phosphoric-sulfuric acid anhydride bond driven by GTP hydrolysis by CysN coupled to ATP hydrolysis by CysD. In Xanthomonas axonopodis pv. citri (strain 306), this protein is Sulfate adenylyltransferase subunit 2.